The following is a 441-amino-acid chain: UDP-N-acetylmuramoylalanine--D-glutamate ligase (441 aa).

Gly113–Thr119 contacts ATP.

The protein belongs to the MurCDEF family.

The protein localises to the cytoplasm. The catalysed reaction is UDP-N-acetyl-alpha-D-muramoyl-L-alanine + D-glutamate + ATP = UDP-N-acetyl-alpha-D-muramoyl-L-alanyl-D-glutamate + ADP + phosphate + H(+). The protein operates within cell wall biogenesis; peptidoglycan biosynthesis. Its function is as follows. Cell wall formation. Catalyzes the addition of glutamate to the nucleotide precursor UDP-N-acetylmuramoyl-L-alanine (UMA). The chain is UDP-N-acetylmuramoylalanine--D-glutamate ligase from Alcanivorax borkumensis (strain ATCC 700651 / DSM 11573 / NCIMB 13689 / SK2).